A 547-amino-acid chain; its full sequence is Chaperonin GroEL (547 aa).

ATP-binding positions include 30–33 (TLGP), Lys-51, 87–91 (DGTTT), Gly-415, 479–481 (NAA), and Asp-495.

Belongs to the chaperonin (HSP60) family. As to quaternary structure, forms a cylinder of 14 subunits composed of two heptameric rings stacked back-to-back. Interacts with the co-chaperonin GroES.

Its subcellular location is the cytoplasm. The catalysed reaction is ATP + H2O + a folded polypeptide = ADP + phosphate + an unfolded polypeptide.. Its function is as follows. Together with its co-chaperonin GroES, plays an essential role in assisting protein folding. The GroEL-GroES system forms a nano-cage that allows encapsulation of the non-native substrate proteins and provides a physical environment optimized to promote and accelerate protein folding. In Polynucleobacter necessarius subsp. necessarius (strain STIR1), this protein is Chaperonin GroEL.